The following is a 716-amino-acid chain: Iron-sulfur clusters transporter atm1, mitochondrial (716 aa).

The transit peptide at 1 to 18 (MAPSIKLSTMATSLHRAH) directs the protein to the mitochondrion. At 19 to 123 (GTSALLRRPR…PKGSWGDKAR (105 aa)) the chain is on the mitochondrial matrix side. Residues 57–87 (LFAPNGSAKDESKPAVSTVPKTTGRGPSDPL) form a disordered region. Residues 124–145 (VLLAIGLLVGGKVLNVQVPFYF) traverse the membrane as a helical segment. One can recognise an ABC transmembrane type-1 domain in the interval 124 to 414 (VLLAIGLLVG…LGSVYRELRQ (291 aa)). The Mitochondrial intermembrane portion of the chain corresponds to 146-168 (REIVDSLNIDFSTTGGSVTAVAG). The chain crosses the membrane as a helical span at residues 169 to 192 (AMILGYGAARVGAVVSQELRNAVF). Topologically, residues 193–241 (ASVAQKAIRKVARNTFEHLLNLDLSFHLSKQTGGLTRAIDRGTKGISFL) are mitochondrial matrix. The chain crosses the membrane as a helical span at residues 242–265 (LTSMVFHIVPTALEISMVCGILTY). A topological domain (mitochondrial intermembrane) is located at residue N266. Residues 267–287 (FGWQYAALTALTMVSYTAFTI) form a helical membrane-spanning segment. Topologically, residues 288 to 353 (LTTAWRTKFR…NSIKVATSLA (66 aa)) are mitochondrial matrix. Glutathione contacts are provided by residues 293–297 (RTKFR) and 356–359 (NSGQ). A helical membrane pass occupies residues 354–372 (FLNSGQNIIFSSALTVMMY). Residues 373-387 (MGAHGVATGQLTVGD) are Mitochondrial intermembrane-facing. A helical transmembrane segment spans residues 388–409 (LVLINQLVFQLSVPLNFLGSVY). G406 is a glutathione binding site. The Mitochondrial matrix portion of the chain corresponds to 410–716 (RELRQSLLDM…KEEVGEKKEA (307 aa)). In terms of domain architecture, ABC transporter spans 449-690 (IEFKDVTFGY…NGVYAQLWRA (242 aa)). ATP is bound by residues Y458 and 482–493 (GPSGCGKSTLLR). The disordered stretch occupies residues 697-716 (EEGEVSKKGEKEEVGEKKEA). A compositionally biased stretch (basic and acidic residues) spans 700-716 (EVSKKGEKEEVGEKKEA).

The protein belongs to the ABC transporter superfamily. ABCB family. Heavy Metal importer (TC 3.A.1.210) subfamily. As to quaternary structure, homodimer.

It localises to the mitochondrion inner membrane. Performs an essential function in the generation of cytoplasmic iron-sulfur proteins by mediating the ATP-dependent export of Fe/S cluster precursors synthesized by egt-3 and other mitochondrial proteins. Hydrolyzes ATP. Binds glutathione and may function by transporting a glutathione-conjugated iron-sulfur compound. In Neurospora crassa (strain ATCC 24698 / 74-OR23-1A / CBS 708.71 / DSM 1257 / FGSC 987), this protein is Iron-sulfur clusters transporter atm1, mitochondrial.